A 673-amino-acid chain; its full sequence is UvrABC system protein B (673 aa).

The region spanning 29–188 is the Helicase ATP-binding domain; it reads EGLNDGLAHQ…LAELQYTRND (160 aa). 42 to 49 lines the ATP pocket; it reads GVTGSGKT. The Beta-hairpin motif lies at 95 to 118; the sequence is YYDYYQPEAYVPSSDTFIEKDASI. A Helicase C-terminal domain is found at 434–600; the sequence is QVDDVLSEIH…ALNKKVGELL (167 aa). Residues 607–632 form a disordered region; sequence KPKRGKQAVKVEEKSANTYKPKSRKE. Residues 634–669 form the UVR domain; it reads EKELKQLEQQMRDFAKDLEFEKAAAVRDKIGQLKAV.

Belongs to the UvrB family. In terms of assembly, forms a heterotetramer with UvrA during the search for lesions. Interacts with UvrC in an incision complex.

The protein localises to the cytoplasm. The UvrABC repair system catalyzes the recognition and processing of DNA lesions. A damage recognition complex composed of 2 UvrA and 2 UvrB subunits scans DNA for abnormalities. Upon binding of the UvrA(2)B(2) complex to a putative damaged site, the DNA wraps around one UvrB monomer. DNA wrap is dependent on ATP binding by UvrB and probably causes local melting of the DNA helix, facilitating insertion of UvrB beta-hairpin between the DNA strands. Then UvrB probes one DNA strand for the presence of a lesion. If a lesion is found the UvrA subunits dissociate and the UvrB-DNA preincision complex is formed. This complex is subsequently bound by UvrC and the second UvrB is released. If no lesion is found, the DNA wraps around the other UvrB subunit that will check the other stand for damage. This chain is UvrABC system protein B, found in Actinobacillus pleuropneumoniae serotype 5b (strain L20).